Here is a 433-residue protein sequence, read N- to C-terminus: Casein kinase 1-like protein 5 (433 aa).

The Protein kinase domain occupies 9–278 (FRLGRKIGSG…LKRLFRNLFI (270 aa)). ATP-binding positions include 15 to 23 (IGSGSFGEI) and lysine 38. Catalysis depends on aspartate 128, which acts as the Proton acceptor. The interval 297-433 (QSQSGNPQPR…DDVEPQSKAL (137 aa)) is disordered. Over residues 342-359 (LKQKDKNGNDSAIAKDKL) the composition is skewed to basic and acidic residues. Low complexity predominate over residues 362-375 (GSLNLGRSEGSSSR). A Phosphoserine modification is found at serine 390. Polar residues predominate over residues 407–423 (INNNAGDETAATPQSNG).

Belongs to the protein kinase superfamily. CK1 Ser/Thr protein kinase family. Casein kinase I subfamily. As to quaternary structure, monomer. Autophosphorylated.

It is found in the cytoplasm. The enzyme catalyses L-seryl-[protein] + ATP = O-phospho-L-seryl-[protein] + ADP + H(+). It carries out the reaction L-threonyl-[protein] + ATP = O-phospho-L-threonyl-[protein] + ADP + H(+). Functionally, casein kinases are operationally defined by their preferential utilization of acidic proteins such as caseins as substrates. It can phosphorylate a large number of proteins. The polypeptide is Casein kinase 1-like protein 5 (Arabidopsis thaliana (Mouse-ear cress)).